The sequence spans 662 residues: Chromosomal replication initiator protein DnaA (662 aa).

Positions 1–93 (MDDEQNVLAT…QVEGLGVRIA (93 aa)) are domain I, interacts with DnaA modulators. The interval 93-322 (AAPATPTAER…STPAPANSSA (230 aa)) is domain II. Residues 96 to 105 (ATPTAERAAA) show a composition bias toward low complexity. The disordered stretch occupies residues 96–294 (ATPTAERAAA…SDGPVERDDE (199 aa)). The segment covering 114–123 (SRPERPRGER) has biased composition (basic and acidic residues). Residues 166–199 (PPAAEYTPAAEYTPAAEYTPAAEYSPEPEYTPAT) show a composition bias toward low complexity. Composition is skewed to basic and acidic residues over residues 236–248 (TPRRDGHGPRRDA) and 261–290 (PGDRPLRDTDRPLREPAAGHDVRESDGPVE). The domain III, AAA+ region stretch occupies residues 323–539 (SLNAKYTFET…GALIRVTAFA (217 aa)). ATP is bound by residues glycine 367, glycine 369, lysine 370, and threonine 371. Residues 540 to 662 (SLNGQPLDLS…LTARIKQRSR (123 aa)) form a domain IV, binds dsDNA region.

It belongs to the DnaA family. In terms of assembly, oligomerizes as a right-handed, spiral filament on DNA at oriC.

It localises to the cytoplasm. Its function is as follows. Plays an essential role in the initiation and regulation of chromosomal replication. ATP-DnaA binds to the origin of replication (oriC) to initiate formation of the DNA replication initiation complex once per cell cycle. Binds the DnaA box (a 9 base pair repeat at the origin) and separates the double-stranded (ds)DNA. Forms a right-handed helical filament on oriC DNA; dsDNA binds to the exterior of the filament while single-stranded (ss)DNA is stabiized in the filament's interior. The ATP-DnaA-oriC complex binds and stabilizes one strand of the AT-rich DNA unwinding element (DUE), permitting loading of DNA polymerase. After initiation quickly degrades to an ADP-DnaA complex that is not apt for DNA replication. Binds acidic phospholipids. This Nocardia farcinica (strain IFM 10152) protein is Chromosomal replication initiator protein DnaA.